A 312-amino-acid polypeptide reads, in one-letter code: Porphobilinogen deaminase (312 aa).

Cys243 carries the S-(dipyrrolylmethanemethyl)cysteine modification.

It belongs to the HMBS family. As to quaternary structure, monomer. Dipyrromethane serves as cofactor.

It catalyses the reaction 4 porphobilinogen + H2O = hydroxymethylbilane + 4 NH4(+). Its pathway is porphyrin-containing compound metabolism; protoporphyrin-IX biosynthesis; coproporphyrinogen-III from 5-aminolevulinate: step 2/4. In terms of biological role, tetrapolymerization of the monopyrrole PBG into the hydroxymethylbilane pre-uroporphyrinogen in several discrete steps. This Vibrio parahaemolyticus serotype O3:K6 (strain RIMD 2210633) protein is Porphobilinogen deaminase.